Here is a 226-residue protein sequence, read N- to C-terminus: Leucyl/phenylalanyl-tRNA--protein transferase (226 aa).

Belongs to the L/F-transferase family.

It is found in the cytoplasm. It carries out the reaction N-terminal L-lysyl-[protein] + L-leucyl-tRNA(Leu) = N-terminal L-leucyl-L-lysyl-[protein] + tRNA(Leu) + H(+). The catalysed reaction is N-terminal L-arginyl-[protein] + L-leucyl-tRNA(Leu) = N-terminal L-leucyl-L-arginyl-[protein] + tRNA(Leu) + H(+). It catalyses the reaction L-phenylalanyl-tRNA(Phe) + an N-terminal L-alpha-aminoacyl-[protein] = an N-terminal L-phenylalanyl-L-alpha-aminoacyl-[protein] + tRNA(Phe). Functionally, functions in the N-end rule pathway of protein degradation where it conjugates Leu, Phe and, less efficiently, Met from aminoacyl-tRNAs to the N-termini of proteins containing an N-terminal arginine or lysine. The polypeptide is Leucyl/phenylalanyl-tRNA--protein transferase (Azotobacter vinelandii (strain DJ / ATCC BAA-1303)).